The sequence spans 450 residues: UDP-N-acetylmuramoylalanine--D-glutamate ligase (450 aa).

119–125 (GSNGKTT) contributes to the ATP binding site.

It belongs to the MurCDEF family.

Its subcellular location is the cytoplasm. The enzyme catalyses UDP-N-acetyl-alpha-D-muramoyl-L-alanine + D-glutamate + ATP = UDP-N-acetyl-alpha-D-muramoyl-L-alanyl-D-glutamate + ADP + phosphate + H(+). Its pathway is cell wall biogenesis; peptidoglycan biosynthesis. Cell wall formation. Catalyzes the addition of glutamate to the nucleotide precursor UDP-N-acetylmuramoyl-L-alanine (UMA). In Streptococcus sanguinis (strain SK36), this protein is UDP-N-acetylmuramoylalanine--D-glutamate ligase.